The following is a 559-amino-acid chain: O-fucosyltransferase 37 (559 aa).

The helical; Signal-anchor for type II membrane protein transmembrane segment at 53–73 (FFLLLISLSLVFSGISFLTFS) threads the bilayer. Asn-126 carries N-linked (GlcNAc...) asparagine glycosylation. 331 to 333 (HLR) contacts substrate. Asn-372, Asn-403, Asn-447, and Asn-504 each carry an N-linked (GlcNAc...) asparagine glycan.

The protein belongs to the glycosyltransferase GT106 family.

The protein localises to the membrane. It functions in the pathway glycan metabolism. The polypeptide is O-fucosyltransferase 37 (Arabidopsis thaliana (Mouse-ear cress)).